The primary structure comprises 31 residues: Cytochrome b6-f complex subunit 6 (31 aa).

A helical transmembrane segment spans residues 4 to 26; the sequence is LTSYFGFLLAALTITSALFIGLN.

It belongs to the PetL family. In terms of assembly, the 4 large subunits of the cytochrome b6-f complex are cytochrome b6, subunit IV (17 kDa polypeptide, PetD), cytochrome f and the Rieske protein, while the 4 small subunits are PetG, PetL, PetM and PetN. The complex functions as a dimer.

The protein localises to the plastid. It localises to the chloroplast thylakoid membrane. Its function is as follows. Component of the cytochrome b6-f complex, which mediates electron transfer between photosystem II (PSII) and photosystem I (PSI), cyclic electron flow around PSI, and state transitions. PetL is important for photoautotrophic growth as well as for electron transfer efficiency and stability of the cytochrome b6-f complex. The sequence is that of Cytochrome b6-f complex subunit 6 from Blitum bonus-henricus (Good King Henry).